The primary structure comprises 44 residues: Large ribosomal subunit protein bL34 (44 aa).

Belongs to the bacterial ribosomal protein bL34 family.

The polypeptide is Large ribosomal subunit protein bL34 (Wolbachia pipientis wMel).